Consider the following 96-residue polypeptide: Large ribosomal subunit protein eL21 (96 aa).

This sequence belongs to the eukaryotic ribosomal protein eL21 family.

The sequence is that of Large ribosomal subunit protein eL21 from Methanothrix thermoacetophila (strain DSM 6194 / JCM 14653 / NBRC 101360 / PT) (Methanosaeta thermophila).